The chain runs to 213 residues: Adenylate kinase (213 aa).

10-15 (GSGKGS) is a binding site for ATP. The tract at residues 30–60 (STGNLFRAILKEDSELARKIKEINVSGGKLV) is NMP. AMP contacts are provided by residues T31, R36, 58-60 (KLV), 87-90 (GYPR), and Q94. The LID stretch occupies residues 123 to 160 (GRWMCPKCAGIYNIHFKKPQVDGVCDNDQATLYQRADD). An ATP-binding site is contributed by R124. The Zn(2+) site is built by C127 and C130. 133-134 (IY) contributes to the ATP binding site. Zn(2+) is bound by residues C147 and D150. Residues R157 and R168 each contribute to the AMP site. Residue Q196 participates in ATP binding.

It belongs to the adenylate kinase family. As to quaternary structure, monomer.

It is found in the cytoplasm. It catalyses the reaction AMP + ATP = 2 ADP. It functions in the pathway purine metabolism; AMP biosynthesis via salvage pathway; AMP from ADP: step 1/1. Catalyzes the reversible transfer of the terminal phosphate group between ATP and AMP. Plays an important role in cellular energy homeostasis and in adenine nucleotide metabolism. This Ureaplasma urealyticum serovar 10 (strain ATCC 33699 / Western) protein is Adenylate kinase.